The following is a 638-amino-acid chain: Mediator of RNA polymerase II transcription subunit 17 (638 aa).

The segment at Met-1 to Pro-21 is disordered.

Belongs to the Mediator complex subunit 17 family. As to quaternary structure, component of the Mediator complex.

The protein localises to the nucleus. Component of the Mediator complex, a coactivator involved in the regulated transcription of nearly all RNA polymerase II-dependent genes. Mediator functions as a bridge to convey information from gene-specific regulatory proteins to the basal RNA polymerase II transcription machinery. Mediator is recruited to promoters by direct interactions with regulatory proteins and serves as a scaffold for the assembly of a functional preinitiation complex with RNA polymerase II and the general transcription factors. The protein is Mediator of RNA polymerase II transcription subunit 17 (srb4) of Aspergillus oryzae (strain ATCC 42149 / RIB 40) (Yellow koji mold).